A 155-amino-acid chain; its full sequence is 6,7-dimethyl-8-ribityllumazine synthase (155 aa).

5-amino-6-(D-ribitylamino)uracil-binding positions include F24, 58-60 (AFE), and 82-84 (VII). 87–88 (ST) is a (2S)-2-hydroxy-3-oxobutyl phosphate binding site. H90 serves as the catalytic Proton donor. F115 serves as a coordination point for 5-amino-6-(D-ribitylamino)uracil. A (2S)-2-hydroxy-3-oxobutyl phosphate-binding site is contributed by R129.

It belongs to the DMRL synthase family.

The catalysed reaction is (2S)-2-hydroxy-3-oxobutyl phosphate + 5-amino-6-(D-ribitylamino)uracil = 6,7-dimethyl-8-(1-D-ribityl)lumazine + phosphate + 2 H2O + H(+). It functions in the pathway cofactor biosynthesis; riboflavin biosynthesis; riboflavin from 2-hydroxy-3-oxobutyl phosphate and 5-amino-6-(D-ribitylamino)uracil: step 1/2. Its function is as follows. Catalyzes the formation of 6,7-dimethyl-8-ribityllumazine by condensation of 5-amino-6-(D-ribitylamino)uracil with 3,4-dihydroxy-2-butanone 4-phosphate. This is the penultimate step in the biosynthesis of riboflavin. The polypeptide is 6,7-dimethyl-8-ribityllumazine synthase (Chlorobaculum tepidum (strain ATCC 49652 / DSM 12025 / NBRC 103806 / TLS) (Chlorobium tepidum)).